Here is a 137-residue protein sequence, read N- to C-terminus: Crustacean calcium-binding protein 23 (137 aa).

3 EF-hand domains span residues 27-48 (RDSSWTLSKEELSRGVSQFGLD), 62-97 (EKKAAVEAAFKHLDKTGDGVVTVEDIKGVYSAKVVK), and 100-135 (ATEEEILKKFLNMFESSTSVDGKVTKKEFLDYYSGL).

In terms of assembly, monomer or disulfide-linked dimers.

Functionally, possibly acts as a regulatory protein and not as a calcium buffer or transport protein. This chain is Crustacean calcium-binding protein 23, found in Homarus americanus (American lobster).